Reading from the N-terminus, the 440-residue chain is MIPKKTKLKSREIEVPGDKSLSHRSVLFAALSKGKSKVTGFLEAEDPLNTMSAFAKLGLKVQKVKPGEYEFESPGKNKLVSPNVDLDFGNAGTGIRLSAGLICGLPGINATLTGDNSLKKRPMGRIIKPLSSMGASIVGLGEKETAPLKIEGKKLKGFRYESPIASAQVKSCLMLAAISSETDLEYSENILSRDHTENMFRFLGNKIEQISPLHFKIKPPYVLNGGEFRVPGDISSAAFFLVLGVLAKEGNLLIKNIGLNPARTGILTALQSMGAKIEIQNKRIECGEPVGDLKTYPSNLKKSNIPESLIPSIIDEIPILSVAGFFAEGGFEIRHAEELRAKESDRIHTMVSNFRELGIEVEEYTDGYSFDGTSKKSSEVWTRLSTVKKIPIQSYMDHRIAMSFLIFKTLSGLDLQIDETSWIETSFPGFEKLLESCINE.

3-phosphoshikimate-binding residues include Lys-19, Ser-20, and Arg-24. Lys-19 lines the phosphoenolpyruvate pocket. Phosphoenolpyruvate-binding residues include Gly-92 and Arg-121. 3-phosphoshikimate is bound by residues Ser-166, Gln-168, Asp-315, and Lys-342. Gln-168 is a phosphoenolpyruvate binding site. The active-site Proton acceptor is Asp-315. Positions 346 and 399 each coordinate phosphoenolpyruvate.

It belongs to the EPSP synthase family. In terms of assembly, monomer.

It localises to the cytoplasm. It catalyses the reaction 3-phosphoshikimate + phosphoenolpyruvate = 5-O-(1-carboxyvinyl)-3-phosphoshikimate + phosphate. It participates in metabolic intermediate biosynthesis; chorismate biosynthesis; chorismate from D-erythrose 4-phosphate and phosphoenolpyruvate: step 6/7. Functionally, catalyzes the transfer of the enolpyruvyl moiety of phosphoenolpyruvate (PEP) to the 5-hydroxyl of shikimate-3-phosphate (S3P) to produce enolpyruvyl shikimate-3-phosphate and inorganic phosphate. This is 3-phosphoshikimate 1-carboxyvinyltransferase from Leptospira interrogans serogroup Icterohaemorrhagiae serovar copenhageni (strain Fiocruz L1-130).